Here is a 469-residue protein sequence, read N- to C-terminus: 3-isopropylmalate dehydratase large subunit (469 aa).

[4Fe-4S] cluster-binding residues include C347, C407, and C410. A compositionally biased stretch (polar residues) spans 424-441 (SASSSNRNFKGRQGSPSG). Residues 424–443 (SASSSNRNFKGRQGSPSGRT) are disordered.

This sequence belongs to the aconitase/IPM isomerase family. LeuC type 1 subfamily. As to quaternary structure, heterodimer of LeuC and LeuD. It depends on [4Fe-4S] cluster as a cofactor.

It carries out the reaction (2R,3S)-3-isopropylmalate = (2S)-2-isopropylmalate. The protein operates within amino-acid biosynthesis; L-leucine biosynthesis; L-leucine from 3-methyl-2-oxobutanoate: step 2/4. Its function is as follows. Catalyzes the isomerization between 2-isopropylmalate and 3-isopropylmalate, via the formation of 2-isopropylmaleate. The protein is 3-isopropylmalate dehydratase large subunit of Prochlorococcus marinus (strain MIT 9312).